We begin with the raw amino-acid sequence, 270 residues long: Aliphatic sulfonates import ATP-binding protein SsuB (270 aa).

The region spanning 17 to 238 (LASSGLRKTF…ARGSHRLAAL (222 aa)) is the ABC transporter domain. 49–56 (GRSGCGKS) serves as a coordination point for ATP. The segment at 249 to 270 (APGAAPEPDPVAPLPTQLRWAH) is disordered.

Belongs to the ABC transporter superfamily. Aliphatic sulfonates importer (TC 3.A.1.17.2) family. As to quaternary structure, the complex is composed of two ATP-binding proteins (SsuB), two transmembrane proteins (SsuC) and a solute-binding protein (SsuA).

The protein resides in the cell inner membrane. It catalyses the reaction ATP + H2O + aliphatic sulfonate-[sulfonate-binding protein]Side 1 = ADP + phosphate + aliphatic sulfonateSide 2 + [sulfonate-binding protein]Side 1.. Its function is as follows. Part of the ABC transporter complex SsuABC involved in aliphatic sulfonates import. Responsible for energy coupling to the transport system. The sequence is that of Aliphatic sulfonates import ATP-binding protein SsuB from Pseudomonas putida (Arthrobacter siderocapsulatus).